The following is a 101-amino-acid chain: NADH-quinone oxidoreductase subunit K (101 aa).

3 consecutive transmembrane segments (helical) span residues 4–24 (LSHY…GIFL), 30–50 (IVLL…FIAF), and 61–81 (VFVF…LAIL).

It belongs to the complex I subunit 4L family. NDH-1 is composed of 14 different subunits. Subunits NuoA, H, J, K, L, M, N constitute the membrane sector of the complex.

The protein localises to the cell inner membrane. The catalysed reaction is a quinone + NADH + 5 H(+)(in) = a quinol + NAD(+) + 4 H(+)(out). Functionally, NDH-1 shuttles electrons from NADH, via FMN and iron-sulfur (Fe-S) centers, to quinones in the respiratory chain. The immediate electron acceptor for the enzyme in this species is believed to be ubiquinone. Couples the redox reaction to proton translocation (for every two electrons transferred, four hydrogen ions are translocated across the cytoplasmic membrane), and thus conserves the redox energy in a proton gradient. The protein is NADH-quinone oxidoreductase subunit K of Methylovorus glucosotrophus (strain SIP3-4).